Here is a 421-residue protein sequence, read N- to C-terminus: 3-phosphoshikimate 1-carboxyvinyltransferase (421 aa).

K20, S21, and R25 together coordinate 3-phosphoshikimate. K20 provides a ligand contact to phosphoenolpyruvate. The phosphoenolpyruvate site is built by G90 and R117. S162, S163, Q164, S190, D304, and K331 together coordinate 3-phosphoshikimate. Q164 lines the phosphoenolpyruvate pocket. D304 (proton acceptor) is an active-site residue. Residues R335 and R376 each contribute to the phosphoenolpyruvate site.

This sequence belongs to the EPSP synthase family. Monomer.

It localises to the cytoplasm. The catalysed reaction is 3-phosphoshikimate + phosphoenolpyruvate = 5-O-(1-carboxyvinyl)-3-phosphoshikimate + phosphate. The protein operates within metabolic intermediate biosynthesis; chorismate biosynthesis. In terms of biological role, catalyzes the transfer of the enolpyruvyl moiety of phosphoenolpyruvate (PEP) to the 5-hydroxyl of shikimate-3-phosphate (S3P) to produce enolpyruvyl shikimate-3-phosphate and inorganic phosphate. This is 3-phosphoshikimate 1-carboxyvinyltransferase from Methanothrix thermoacetophila (strain DSM 6194 / JCM 14653 / NBRC 101360 / PT) (Methanosaeta thermophila).